The following is a 541-amino-acid chain: DNA ligase 1 (541 aa).

Glutamate 234 is a binding site for ATP. Lysine 236 serves as the catalytic N6-AMP-lysine intermediate. 6 residues coordinate ATP: arginine 241, arginine 256, glutamate 286, phenylalanine 325, arginine 398, and lysine 404.

The protein belongs to the ATP-dependent DNA ligase family. Mg(2+) serves as cofactor.

It catalyses the reaction ATP + (deoxyribonucleotide)n-3'-hydroxyl + 5'-phospho-(deoxyribonucleotide)m = (deoxyribonucleotide)n+m + AMP + diphosphate.. DNA ligase that seals nicks in double-stranded DNA during DNA replication, DNA recombination and DNA repair. The polypeptide is DNA ligase 1 (Korarchaeum cryptofilum (strain OPF8)).